The primary structure comprises 447 residues: UDP-N-acetylmuramoylalanine--D-glutamate ligase (447 aa).

112-118 serves as a coordination point for ATP; sequence GTNGKST.

Belongs to the MurCDEF family.

Its subcellular location is the cytoplasm. It catalyses the reaction UDP-N-acetyl-alpha-D-muramoyl-L-alanine + D-glutamate + ATP = UDP-N-acetyl-alpha-D-muramoyl-L-alanyl-D-glutamate + ADP + phosphate + H(+). It functions in the pathway cell wall biogenesis; peptidoglycan biosynthesis. Its function is as follows. Cell wall formation. Catalyzes the addition of glutamate to the nucleotide precursor UDP-N-acetylmuramoyl-L-alanine (UMA). This is UDP-N-acetylmuramoylalanine--D-glutamate ligase from Legionella pneumophila subsp. pneumophila (strain Philadelphia 1 / ATCC 33152 / DSM 7513).